The following is a 156-amino-acid chain: ATP synthase subunit b (156 aa).

A helical membrane pass occupies residues 7 to 27 (LFVQAIVFLILVLFTMKFVWP).

This sequence belongs to the ATPase B chain family. As to quaternary structure, F-type ATPases have 2 components, F(1) - the catalytic core - and F(0) - the membrane proton channel. F(1) has five subunits: alpha(3), beta(3), gamma(1), delta(1), epsilon(1). F(0) has three main subunits: a(1), b(2) and c(10-14). The alpha and beta chains form an alternating ring which encloses part of the gamma chain. F(1) is attached to F(0) by a central stalk formed by the gamma and epsilon chains, while a peripheral stalk is formed by the delta and b chains.

It is found in the cell inner membrane. In terms of biological role, f(1)F(0) ATP synthase produces ATP from ADP in the presence of a proton or sodium gradient. F-type ATPases consist of two structural domains, F(1) containing the extramembraneous catalytic core and F(0) containing the membrane proton channel, linked together by a central stalk and a peripheral stalk. During catalysis, ATP synthesis in the catalytic domain of F(1) is coupled via a rotary mechanism of the central stalk subunits to proton translocation. Its function is as follows. Component of the F(0) channel, it forms part of the peripheral stalk, linking F(1) to F(0). This is ATP synthase subunit b from Delftia acidovorans (strain DSM 14801 / SPH-1).